The following is a 109-amino-acid chain: MAASAARGAAALRRSINQPVAFVRRIPWTAASSQLKEHFAQFGHVRRCILPFDKETGFHRGLGWVQFSSEGGLRNALQQENHIIDGVKVQVHTRRPKLPQTSDDEKKDF.

Ser15 carries the post-translational modification Phosphoserine. Positions 19–103 (PVAFVRRIPW…RRPKLPQTSD (85 aa)) constitute an RRM domain. Thr101 carries the phosphothreonine modification. Ser102 is modified (phosphoserine).

The protein localises to the mitochondrion. Its subcellular location is the nucleus. In terms of biological role, RNA-binding protein that acts as a nuclear receptor corepressor. Probably acts by binding the SRA RNA, and repressing the SRA-mediated nuclear receptor coactivation. Binds the STR7 loop of SRA RNA. Also able to repress glucocorticoid (GR), androgen (AR), thyroid (TR) and VDR-mediated transactivation. This Pongo abelii (Sumatran orangutan) protein is SRA stem-loop-interacting RNA-binding protein, mitochondrial (SLIRP).